Here is a 240-residue protein sequence, read N- to C-terminus: Ribosomal RNA large subunit methyltransferase E (240 aa).

The interval 1–28 (MSSSPRSPDARPLKVRVKSARTRSSSSQ) is disordered. S-adenosyl-L-methionine-binding residues include glycine 80, tryptophan 82, aspartate 103, aspartate 119, and aspartate 143. Lysine 183 acts as the Proton acceptor in catalysis.

This sequence belongs to the class I-like SAM-binding methyltransferase superfamily. RNA methyltransferase RlmE family.

Its subcellular location is the cytoplasm. The enzyme catalyses uridine(2552) in 23S rRNA + S-adenosyl-L-methionine = 2'-O-methyluridine(2552) in 23S rRNA + S-adenosyl-L-homocysteine + H(+). In terms of biological role, specifically methylates the uridine in position 2552 of 23S rRNA at the 2'-O position of the ribose in the fully assembled 50S ribosomal subunit. The sequence is that of Ribosomal RNA large subunit methyltransferase E from Azorhizobium caulinodans (strain ATCC 43989 / DSM 5975 / JCM 20966 / LMG 6465 / NBRC 14845 / NCIMB 13405 / ORS 571).